Reading from the N-terminus, the 216-residue chain is Octanoyltransferase (216 aa).

The BPL/LPL catalytic domain maps to 32-211 (QEASEMLWFL…RFPYFLEALQ (180 aa)). Residues 71 to 78 (RGGRYTYH), 142 to 144 (AIG), and 155 to 157 (GFS) contribute to the substrate site. C173 serves as the catalytic Acyl-thioester intermediate.

The protein belongs to the LipB family.

It localises to the cytoplasm. The catalysed reaction is octanoyl-[ACP] + L-lysyl-[protein] = N(6)-octanoyl-L-lysyl-[protein] + holo-[ACP] + H(+). Its pathway is protein modification; protein lipoylation via endogenous pathway; protein N(6)-(lipoyl)lysine from octanoyl-[acyl-carrier-protein]: step 1/2. In terms of biological role, catalyzes the transfer of endogenously produced octanoic acid from octanoyl-acyl-carrier-protein onto the lipoyl domains of lipoate-dependent enzymes. Lipoyl-ACP can also act as a substrate although octanoyl-ACP is likely to be the physiological substrate. This chain is Octanoyltransferase, found in Zymomonas mobilis subsp. mobilis (strain ATCC 31821 / ZM4 / CP4).